The following is a 496-amino-acid chain: Ankyrin repeat domain-containing protein 34A (496 aa).

4 ANK repeats span residues 4 to 33 (TEGH…YVNE), 37 to 72 (QGET…DPNI), 76 to 106 (LGRT…DPSV), and 110 to 139 (AGAS…AKGT). The residue at position 15 (Gln15) is an N5-methylglutamine. Composition is skewed to polar residues over residues 147–162 (DTSP…YLNS) and 180–191 (FCTSPSEIQLQT). Positions 147 to 473 (DTSPSGTKKT…TKRKLVRRHS (327 aa)) are disordered. Over residues 204 to 214 (AQEEEEKRDVF) the composition is skewed to basic and acidic residues. Pro residues predominate over residues 218–233 (LPKPPDDPSPSEPLPK). Positions 234 to 243 (PPRHPPKPLK) are enriched in basic residues. Thr316 carries the phosphothreonine modification. Positions 463–473 (RTKRKLVRRHS) are enriched in basic residues.

The protein belongs to the ANKRD34 family. In terms of processing, methylated at Gln-15 by N6AMT1.

The chain is Ankyrin repeat domain-containing protein 34A (ANKRD34A) from Homo sapiens (Human).